The following is a 545-amino-acid chain: Membrane protein insertase YidC (545 aa).

Helical transmembrane passes span 350–370 (IIGN…AVLY), 424–444 (LPML…FASV), 461–481 (ADPY…QTYL), and 498–518 (PLVF…YWVV).

The protein belongs to the OXA1/ALB3/YidC family. Type 1 subfamily. Interacts with the Sec translocase complex via SecD. Specifically interacts with transmembrane segments of nascent integral membrane proteins during membrane integration.

The protein localises to the cell inner membrane. Required for the insertion and/or proper folding and/or complex formation of integral membrane proteins into the membrane. Involved in integration of membrane proteins that insert both dependently and independently of the Sec translocase complex, as well as at least some lipoproteins. Aids folding of multispanning membrane proteins. In Neisseria meningitidis serogroup B (strain ATCC BAA-335 / MC58), this protein is Membrane protein insertase YidC.